A 456-amino-acid chain; its full sequence is Frizzled/smoothened-like sans CRD protein F (456 aa).

The first 30 residues, 1–30, serve as a signal peptide directing secretion; it reads MIFNNLKNQNKIINFLIIFYFLSFLKQIES. Topologically, residues 31-92 are extracellular; it reads QSINITSSSS…PFFTINEWNK (62 aa). Residues Asn34, Asn52, and Asn70 are each glycosylated (N-linked (GlcNAc...) asparagine). Residues 93-113 form a helical membrane-spanning segment; it reads FLNMSLVMGTISFFSGLFLLV. Residues 114-127 are Cytoplasmic-facing; the sequence is TYSPIVNKTHNRHT. A helical transmembrane segment spans residues 128-148; the sequence is IGVMCMSFGVCLAMCSDMWNF. Topologically, residues 149-174 are extracellular; that stretch reads GSNFTEKSICPSPGQYLSTSNARCLS. Asn151 carries N-linked (GlcNAc...) asparagine glycosylation. Residues 175–195 form a helical membrane-spanning segment; the sequence is SGIFLQFGGVFGFLNWTLLSF. The Cytoplasmic portion of the chain corresponds to 196-211; that stretch reads DLFMNIKGIITKNYDK. Residues 212-232 traverse the membrane as a helical segment; sequence YYVSGTFIIAIIFTFVPIVND. Topologically, residues 233-252 are extracellular; that stretch reads QYSMSYIGLGCWLGSAMYQL. A helical transmembrane segment spans residues 253–273; the sequence is IFFWILLSICLIVSSVFIILI. Residues 274-297 lie on the Cytoplasmic side of the membrane; the sequence is LKEVYIIIKLSKQKTSLKGNIRPL. Residues 298–318 form a helical membrane-spanning segment; sequence ICISITGFAFFYMFFYYISIV. The Extracellular portion of the chain corresponds to 319–354; that stretch reads VEGDYYERVLNEYTDCLMDPTKDISECKSPRMSVAS. Residues 355–375 form a helical membrane-spanning segment; sequence EFVFLLCLRLLGIGAFIFYGI. At 376-456 the chain is on the cytoplasmic side; sequence NNKVKKIWLN…ESSLNSVDEI (81 aa). Positions 403-422 are disordered; that stretch reads ADNDKSNSNGSKVLYRTNNT.

The protein belongs to the G-protein coupled receptor Fz/Smo family.

The protein localises to the membrane. The sequence is that of Frizzled/smoothened-like sans CRD protein F (fscF) from Dictyostelium discoideum (Social amoeba).